The following is a 147-amino-acid chain: ATP synthase epsilon chain (147 aa).

The protein belongs to the ATPase epsilon chain family. In terms of assembly, F-type ATPases have 2 components, CF(1) - the catalytic core - and CF(0) - the membrane proton channel. CF(1) has five subunits: alpha(3), beta(3), gamma(1), delta(1), epsilon(1). CF(0) has three main subunits: a, b and c.

It localises to the cell inner membrane. Produces ATP from ADP in the presence of a proton gradient across the membrane. The polypeptide is ATP synthase epsilon chain (Protochlamydia amoebophila (strain UWE25)).